The following is a 505-amino-acid chain: Flagellin (505 aa).

It belongs to the bacterial flagellin family.

The protein resides in the secreted. It is found in the bacterial flagellum. Its function is as follows. Flagellin is the subunit protein which polymerizes to form the filaments of bacterial flagella. The polypeptide is Flagellin (fliC) (Salmonella moscow).